Reading from the N-terminus, the 243-residue chain is Putative C-type lectin protein A7 (243 aa).

Residues 23-43 (IFFILAATNLMIAAFALGCLA) traverse the membrane as a helical segment. The C-type lectin domain occupies 116–223 (GQKACYYVPP…CTTSKLCLCG (108 aa)). 2 cysteine pairs are disulfide-bonded: Cys-137/Cys-222 and Cys-198/Cys-214.

The protein resides in the host membrane. The chain is Putative C-type lectin protein A7 (A7) from Alcelaphine herpesvirus 1 (strain C500) (AlHV-1).